Reading from the N-terminus, the 523-residue chain is Flavin-dependent halogenase armH5 (523 aa).

FAD is bound by residues Gly-17, Ala-20, and Glu-50. Ser-328 and Gly-329 together coordinate chloride. Val-330 lines the FAD pocket.

Belongs to the flavin-dependent halogenase family.

The enzyme catalyses melleolide F + FADH2 + chloride + O2 = 6'-chloromelleolide F + FAD + 2 H2O + H(+). Flavin-dependent halogenase involved in the biosynthesis of melleolides, a range of antifungal and phytotoxic polyketide derivatives composed of an orsellinic acid (OA) moiety esterified to various sesquiterpene alcohols. The halogenase catalyzes the transfer of a single chlorine atom to the melleolide backbone, resulting in a 6'-chloromelleolide product. The enzyme acts on free substrate and does not depend on carrier-protein-dependent acceptor molecules. The sequence is that of Flavin-dependent halogenase armH5 from Armillaria mellea (Honey mushroom).